Reading from the N-terminus, the 274-residue chain is CDC48-associated ubiquitin-like/zinc finger protein 1 (274 aa).

The AN1-type zinc finger occupies 12-58; sequence LDVGKHCAYCRQLDFLPFHCSFCNEDFCSNHRLKEDHHCRWLLEHEE. Zn(2+) is bound by residues Cys18, Cys21, Cys31, Cys34, Cys39, His42, His48, and Cys50. The interval 170-266 is ubiquitin-like; the sequence is NRIYIWCYLV…KDLDTLYLVH (97 aa). The residue at position 273 (Ser273) is a Phosphoserine.

In terms of assembly, interacts (via its ubiquitin-like domain) with CDC48 (via N-terminus). Associates with the 26S proteasome. Specifically interacts with the regulatory particle (RP) subunit RPN2. Exposure to arsenite, a known inducer of protein misfolding resulting in accumulation of polyubiquitinated conjugates, enhances the association with the proteoasome. Binds to ubiquitinated proteins conjugated to a 4 or more molecule ubiquitin chain. Binding to ubiquitinated proteins is zinc-dependent.

The protein localises to the cytoplasm. The protein resides in the nucleus. Functionally, promotes efficient arsenite-induced clearance of stress granules (SGs). May have a role in the ubiquitin-proteasome system (UPS) protecting cells from metalloid-induced proteotoxicity. The polypeptide is CDC48-associated ubiquitin-like/zinc finger protein 1 (Saccharomyces cerevisiae (strain ATCC 204508 / S288c) (Baker's yeast)).